We begin with the raw amino-acid sequence, 430 residues long: Signal recognition particle protein (430 aa).

GTP is bound by residues 105-112, 187-191, and 245-248; these read GLQGSGKT, DTAGR, and TKLD.

This sequence belongs to the GTP-binding SRP family. SRP54 subfamily. Part of the signal recognition particle protein translocation system, which is composed of SRP and FtsY.

It localises to the cytoplasm. The catalysed reaction is GTP + H2O = GDP + phosphate + H(+). Functionally, involved in targeting and insertion of nascent membrane proteins into the cytoplasmic membrane. Binds to the hydrophobic signal sequence of the ribosome-nascent chain (RNC) as it emerges from the ribosomes. The SRP-RNC complex is then targeted to the cytoplasmic membrane where it interacts with the SRP receptor FtsY. The protein is Signal recognition particle protein of Thermus aquaticus.